A 189-amino-acid polypeptide reads, in one-letter code: GMP synthase [glutamine-hydrolyzing] subunit A (189 aa).

The Glutamine amidotransferase type-1 domain maps to Lys-5–Tyr-189. The active-site Nucleophile is Cys-79. Active-site residues include His-166 and Glu-168.

In terms of assembly, heterodimer composed of a glutamine amidotransferase subunit (A) and a GMP-binding subunit (B).

It carries out the reaction XMP + L-glutamine + ATP + H2O = GMP + L-glutamate + AMP + diphosphate + 2 H(+). It functions in the pathway purine metabolism; GMP biosynthesis; GMP from XMP (L-Gln route): step 1/1. Functionally, catalyzes the synthesis of GMP from XMP. This chain is GMP synthase [glutamine-hydrolyzing] subunit A, found in Methanosarcina mazei (strain ATCC BAA-159 / DSM 3647 / Goe1 / Go1 / JCM 11833 / OCM 88) (Methanosarcina frisia).